The sequence spans 968 residues: Bifunctional glyoxylate cycle protein (968 aa).

The interval 1 to 443 is isocitrate lyase; the sequence is MSSAAKNFYQ…AVASQDEEIL (443 aa). Residues 444-968 are malate synthase; sequence SLTAQNVAGD…AYDRLVSEGY (525 aa). Catalysis depends on Arg601, which acts as the Proton acceptor. Asp881 (proton donor) is an active-site residue.

It in the N-terminal section; belongs to the isocitrate lyase/PEP mutase superfamily. Isocitrate lyase family. This sequence in the C-terminal section; belongs to the malate synthase family. In terms of tissue distribution, intestinal and body wall muscle cells.

The enzyme catalyses D-threo-isocitrate = glyoxylate + succinate. The catalysed reaction is glyoxylate + acetyl-CoA + H2O = (S)-malate + CoA + H(+). Its pathway is carbohydrate metabolism; glyoxylate cycle; (S)-malate from isocitrate: step 1/2. It participates in carbohydrate metabolism; glyoxylate cycle; (S)-malate from isocitrate: step 2/2. The protein is Bifunctional glyoxylate cycle protein (icl-1) of Caenorhabditis elegans.